We begin with the raw amino-acid sequence, 430 residues long: Glutamate-1-semialdehyde 2,1-aminomutase (430 aa).

At Lys-269 the chain carries N6-(pyridoxal phosphate)lysine.

It belongs to the class-III pyridoxal-phosphate-dependent aminotransferase family. HemL subfamily. As to quaternary structure, homodimer. It depends on pyridoxal 5'-phosphate as a cofactor.

The protein localises to the cytoplasm. The catalysed reaction is (S)-4-amino-5-oxopentanoate = 5-aminolevulinate. It functions in the pathway porphyrin-containing compound metabolism; protoporphyrin-IX biosynthesis; 5-aminolevulinate from L-glutamyl-tRNA(Glu): step 2/2. The protein is Glutamate-1-semialdehyde 2,1-aminomutase of Desulfitobacterium hafniense (strain Y51).